The following is a 553-amino-acid chain: MSDIAITISLLALVAVIGLWIGHWKIRGVGLGIGGVLFGGIIVAHFTNQYGLKLDAHTMHFIQEFGLILFVYTIGIQVGPGFFASLRQSGLKLNGFAALIVLLGSLAVIVIHKLADVPLDIILGIYSGAVTNTPSLGAGQQILSELGLTQTTSTMGMAYAMAYPFGICGILLSMWLIRLFFRIKIDDEAKNFLKESGQDKETLGSINVRVTNPNLDGLRLVDIPGFDEKRDVVCTRLKRDEHISVPQANTIIQKGDLLHLVGEIPLLRKIKLVLGEEVDVPLSSFTGDLRSDRIVVTNEKVLGKKIRALGIHQKYGVVISRLNRAGVELVPTANTALQFGDVLHVVGRSEVLNQAVSILGNAQQKLQQVQMLPVFIGIGLGVLLGSIPFHIPGFPVPLKLGLAGGPLVVALILARIGSIGKLYWFMPPSANLALREIGIVLFLAVVGLKSGGNFVDTLVNGSGLEWMVYGIFITFVPLMIVGIVARLYAKMNYLSLCGLLAGSMTDPPALAFANAIKEESGASALSYATVYPLVMFLRIISPQLLAILLWTLL.

The next 5 helical transmembrane spans lie at 4 to 24 (IAIT…IGHW), 28 to 48 (GVGL…HFTN), 65 to 85 (FGLI…FFAS), 91 to 111 (LKLN…VIVI), and 157 to 177 (MAYA…MWLI). RCK C-terminal domains lie at 190-276 (KNFL…VLGE) and 277-361 (EVDV…ILGN). A run of 6 helical transmembrane segments spans residues 371-391 (MLPV…PFHI), 403-425 (AGGP…LYWF), 439-459 (IVLF…DTLV), 464-484 (LEWM…VGIV), 496-516 (LCGL…ANAI), and 533-553 (LVMF…WTLL).

It belongs to the AAE transporter (TC 2.A.81) family. YidE subfamily.

It is found in the cell membrane. This Pasteurella multocida (strain Pm70) protein is Putative transport protein PM1071.